A 335-amino-acid chain; its full sequence is GTPase Obg (335 aa).

In terms of domain architecture, Obg spans 1 to 159; sequence MKFVDSASIR…REIGLELSIM (159 aa). The region spanning 160-332 is the OBG-type G domain; it reads ADIGLLGMPN…LVAGLFKLVK (173 aa). Residues 166–173, 191–195, 212–215, 282–285, and 313–315 each bind GTP; these read GMPNAGKS, FTTLH, DIPG, NKMD, and SAL. Positions 173 and 193 each coordinate Mg(2+).

It belongs to the TRAFAC class OBG-HflX-like GTPase superfamily. OBG GTPase family. As to quaternary structure, monomer. Requires Mg(2+) as cofactor.

The protein localises to the cytoplasm. An essential GTPase which binds GTP, GDP and possibly (p)ppGpp with moderate affinity, with high nucleotide exchange rates and a fairly low GTP hydrolysis rate. Plays a role in control of the cell cycle, stress response, ribosome biogenesis and in those bacteria that undergo differentiation, in morphogenesis control. The polypeptide is GTPase Obg (Ruthia magnifica subsp. Calyptogena magnifica).